Reading from the N-terminus, the 216-residue chain is Cytochrome c biogenesis ATP-binding export protein CcmA (216 aa).

The ABC transporter domain maps to 11–216 (VSASKLTCIR…RKIRLDYRFV (206 aa)). An ATP-binding site is contributed by 43 to 50 (GPNGAGKT).

The protein belongs to the ABC transporter superfamily. CcmA exporter (TC 3.A.1.107) family. The complex is composed of two ATP-binding proteins (CcmA) and two transmembrane proteins (CcmB).

The protein localises to the cell inner membrane. The enzyme catalyses heme b(in) + ATP + H2O = heme b(out) + ADP + phosphate + H(+). In terms of biological role, part of the ABC transporter complex CcmAB involved in the biogenesis of c-type cytochromes; once thought to export heme, this seems not to be the case, but its exact role is uncertain. Responsible for energy coupling to the transport system. This Shewanella sp. (strain MR-7) protein is Cytochrome c biogenesis ATP-binding export protein CcmA.